The chain runs to 263 residues: Meiotic drive suppressor wtf6 (263 aa).

Residues 1–68 are disordered; that stretch reads MKNNYTSLKS…REKNPSRSTD (68 aa). Basic and acidic residues predominate over residues 19–30; sequence KTDHEIDLEKGP. Helical transmembrane passes span 73 to 93, 110 to 130, and 201 to 221; these read FLIK…PAVC, WTLF…LTYF, and SASA…AETV.

The protein belongs to the WTF family. As to quaternary structure, homomer. Interacts with other proteins that exhibit high sequence similarity.

The protein localises to the spore membrane. It is found in the vacuole membrane. Acts as a suppressor component of the dual wtf meiotic drive system, and can suppress but not confer meiotic drive by compatible poisons. Wtf meiotic drive systems promote unequal transmission of alleles from the parental zygote to progeny spores by encoding a poison and an antidote from the same locus; the poison is trans-acting and forms toxic aggregates in all spores within an ascus, wherease the antidote is spore-specific and targets aggregates for degradation by the vacuole. Meiotic drive by wtf systems therefore lead to poisoning of all progeny that do not inherit the dual poison/antidote allele, or express a compatible antidote. This chain is Meiotic drive suppressor wtf6, found in Schizosaccharomyces kambucha (Fission yeast).